Here is a 66-residue protein sequence, read N- to C-terminus: uncharacterized protein (66 aa).

To M.jannaschii MJ0582.

This is an uncharacterized protein from Methanocaldococcus jannaschii (strain ATCC 43067 / DSM 2661 / JAL-1 / JCM 10045 / NBRC 100440) (Methanococcus jannaschii).